Consider the following 183-residue polypeptide: NEDD8-conjugating enzyme Ubc12 (183 aa).

Met1 carries the post-translational modification N-acetylmethionine. A disordered region spans residues 1-28; it reads MIKLFSLKQQKKEEESAGGTKGSSKKAS. Residues 29-173 enclose the UBC core domain; it reads AAQLRIQKDI…VQRSMRGGYI (145 aa). The Glycyl thioester intermediate role is filled by Cys111.

The protein belongs to the ubiquitin-conjugating enzyme family. UBC12 subfamily. Post-translationally, the acetylation of Met-1 increases affinity for DCUN1D1 by about 2 orders of magnitude and is crucial for NEDD8 transfer to cullins.

It carries out the reaction [E1 NEDD8-activating enzyme]-S-[NEDD8 protein]-yl-L-cysteine + [E2 NEDD8-conjugating enzyme]-L-cysteine = [E1 NEDD8-activating enzyme]-L-cysteine + [E2 NEDD8-conjugating enzyme]-S-[NEDD8-protein]-yl-L-cysteine.. The protein operates within protein modification; protein neddylation. Functionally, accepts the ubiquitin-like protein NEDD8 from the UBA3-NAE1 E1 complex and catalyzes its covalent attachment to other proteins. The specific interaction with the E3 ubiquitin ligase rbx1, but not rbx2, suggests that the rbx1-ube2m complex neddylates specific target proteins, such as cul1, cul2, cul3 and cul4. Involved in cell proliferation. This is NEDD8-conjugating enzyme Ubc12 (ube2m) from Xenopus laevis (African clawed frog).